The chain runs to 175 residues: Large ribosomal subunit protein uL6 (175 aa).

Belongs to the universal ribosomal protein uL6 family. In terms of assembly, part of the 50S ribosomal subunit.

Functionally, this protein binds to the 23S rRNA, and is important in its secondary structure. It is located near the subunit interface in the base of the L7/L12 stalk, and near the tRNA binding site of the peptidyltransferase center. The protein is Large ribosomal subunit protein uL6 of Xanthomonas oryzae pv. oryzae (strain MAFF 311018).